Consider the following 77-residue polypeptide: ATP synthase subunit c (77 aa).

A run of 2 helical transmembrane segments spans residues 10–30 and 57–77; these read IAVA…FGNM and GLID…LFVL.

The protein belongs to the ATPase C chain family. In terms of assembly, F-type ATPases have 2 components, F(1) - the catalytic core - and F(0) - the membrane proton channel. F(1) has five subunits: alpha(3), beta(3), gamma(1), delta(1), epsilon(1). F(0) has three main subunits: a(1), b(2) and c(10-14). The alpha and beta chains form an alternating ring which encloses part of the gamma chain. F(1) is attached to F(0) by a central stalk formed by the gamma and epsilon chains, while a peripheral stalk is formed by the delta and b chains.

It localises to the cell inner membrane. Its function is as follows. F(1)F(0) ATP synthase produces ATP from ADP in the presence of a proton or sodium gradient. F-type ATPases consist of two structural domains, F(1) containing the extramembraneous catalytic core and F(0) containing the membrane proton channel, linked together by a central stalk and a peripheral stalk. During catalysis, ATP synthesis in the catalytic domain of F(1) is coupled via a rotary mechanism of the central stalk subunits to proton translocation. Functionally, key component of the F(0) channel; it plays a direct role in translocation across the membrane. A homomeric c-ring of between 10-14 subunits forms the central stalk rotor element with the F(1) delta and epsilon subunits. This chain is ATP synthase subunit c, found in Pseudoalteromonas translucida (strain TAC 125).